The sequence spans 281 residues: Bifunctional protein FolD (281 aa).

Residues 165 to 167, Thr-192, and Val-233 each bind NADP(+); that span reads GRG.

This sequence belongs to the tetrahydrofolate dehydrogenase/cyclohydrolase family. Homodimer.

It carries out the reaction (6R)-5,10-methylene-5,6,7,8-tetrahydrofolate + NADP(+) = (6R)-5,10-methenyltetrahydrofolate + NADPH. The catalysed reaction is (6R)-5,10-methenyltetrahydrofolate + H2O = (6R)-10-formyltetrahydrofolate + H(+). Its pathway is one-carbon metabolism; tetrahydrofolate interconversion. Its function is as follows. Catalyzes the oxidation of 5,10-methylenetetrahydrofolate to 5,10-methenyltetrahydrofolate and then the hydrolysis of 5,10-methenyltetrahydrofolate to 10-formyltetrahydrofolate. The polypeptide is Bifunctional protein FolD (Mycobacteroides abscessus (strain ATCC 19977 / DSM 44196 / CCUG 20993 / CIP 104536 / JCM 13569 / NCTC 13031 / TMC 1543 / L948) (Mycobacterium abscessus)).